The sequence spans 490 residues: UDP-N-acetylmuramoylalanine--D-glutamate ligase (490 aa).

124–130 contributes to the ATP binding site; sequence GTNGKTT.

It belongs to the MurCDEF family.

It is found in the cytoplasm. The catalysed reaction is UDP-N-acetyl-alpha-D-muramoyl-L-alanine + D-glutamate + ATP = UDP-N-acetyl-alpha-D-muramoyl-L-alanyl-D-glutamate + ADP + phosphate + H(+). Its pathway is cell wall biogenesis; peptidoglycan biosynthesis. Its function is as follows. Cell wall formation. Catalyzes the addition of glutamate to the nucleotide precursor UDP-N-acetylmuramoyl-L-alanine (UMA). The polypeptide is UDP-N-acetylmuramoylalanine--D-glutamate ligase (murD) (Mycobacterium leprae (strain TN)).